Consider the following 202-residue polypeptide: Elongation factor Ts, chloroplastic (202 aa).

Belongs to the EF-Ts family.

It localises to the plastid. Its subcellular location is the chloroplast. In terms of biological role, associates with the EF-Tu.GDP complex and induces the exchange of GDP to GTP. It remains bound to the aminoacyl-tRNA.EF-Tu.GTP complex up to the GTP hydrolysis stage on the ribosome. In Phaeodactylum tricornutum (strain CCAP 1055/1), this protein is Elongation factor Ts, chloroplastic (tsf).